Reading from the N-terminus, the 208-residue chain is uncharacterized protein (208 aa).

Residues 118-134 (QYPNQYQQQPQQQQPGY) are compositionally biased toward low complexity. The segment at 118–208 (QYPNQYQQQP…HKKEKNEIKE (91 aa)) is disordered. Over residues 138 to 175 (NYNQPPVQLNKQAYDNYQQNDYKSNNQPNLAKENNISN) the composition is skewed to polar residues. Positions 187 to 201 (KKEKKHSFFSKLHKK) are enriched in basic residues.

This is an uncharacterized protein from Dictyostelium discoideum (Social amoeba).